A 317-amino-acid polypeptide reads, in one-letter code: Ribosomal protein L11 methyltransferase (317 aa).

Residues Thr-158, Gly-179, Asp-201, and Asn-244 each coordinate S-adenosyl-L-methionine.

This sequence belongs to the methyltransferase superfamily. PrmA family.

The protein resides in the cytoplasm. The enzyme catalyses L-lysyl-[protein] + 3 S-adenosyl-L-methionine = N(6),N(6),N(6)-trimethyl-L-lysyl-[protein] + 3 S-adenosyl-L-homocysteine + 3 H(+). Functionally, methylates ribosomal protein L11. The sequence is that of Ribosomal protein L11 methyltransferase from Streptococcus pyogenes serotype M28 (strain MGAS6180).